The primary structure comprises 256 residues: Major prion protein (256 aa).

A signal peptide spans 1-24 (MVKSHIGSWILVLFVAMWSDVGLC). The interval 25 to 233 (KKRPKPGGGW…ESQAYYQRGA (209 aa)) is interaction with GRB2, ERI3 and SYN1. Residues 28-110 (PKPGGGWNTG…QWNKPSKPKT (83 aa)) form a disordered region. 5 repeat units span residues 54–62 (PQGGGGWGQ), 63–70 (PHGGGWGQ), 71–78 (PHGGGWGQ), 79–86 (PHGGGWGQ), and 87–95 (PHGGGGWGQ). Residues 54-95 (PQGGGGWGQPHGGGWGQPHGGGWGQPHGGGWGQPHGGGGWGQ) are 5 X 8 AA tandem repeats of P-H-G-G-G-W-G-Q. The segment covering 55–97 (QGGGGWGQPHGGGWGQPHGGGWGQPHGGGWGQPHGGGGWGQGG) has biased composition (gly residues). Positions 64, 65, 66, 72, 73, 74, 80, 81, 82, 88, 90, and 91 each coordinate Cu(2+). C182 and C217 are disulfide-bonded. N-linked (GlcNAc...) asparagine glycans are attached at residues N184 and N200. A lipid anchor (GPI-anchor amidated alanine) is attached at A233. The propeptide at 234-256 (SVILFSSPPVILLISFLIFLIVG) is removed in mature form.

The protein belongs to the prion family. Monomer and homodimer. Has a tendency to aggregate into amyloid fibrils containing a cross-beta spine, formed by a steric zipper of superposed beta-strands. Soluble oligomers may represent an intermediate stage on the path to fibril formation. Copper binding may promote oligomerization. Interacts with GRB2, APP, ERI3/PRNPIP and SYN1. Mislocalized cytosolically exposed PrP interacts with MGRN1; this interaction alters MGRN1 subcellular location and causes lysosomal enlargement. Interacts with KIAA1191.

The protein resides in the cell membrane. The protein localises to the golgi apparatus. Its primary physiological function is unclear. Has cytoprotective activity against internal or environmental stresses. May play a role in neuronal development and synaptic plasticity. May be required for neuronal myelin sheath maintenance. May play a role in iron uptake and iron homeostasis. Soluble oligomers are toxic to cultured neuroblastoma cells and induce apoptosis (in vitro). Association with GPC1 (via its heparan sulfate chains) targets PRNP to lipid rafts. Also provides Cu(2+) or Zn(2+) for the ascorbate-mediated GPC1 deaminase degradation of its heparan sulfate side chains. In Budorcas taxicolor (Golden takin), this protein is Major prion protein (PRNP).